The primary structure comprises 2527 residues: Leucine-rich repeat serine/threonine-protein kinase 2 (2527 aa).

The tract at residues 1 to 969 (MASGSCQGCE…RSSKLQSHMR (969 aa)) is required for RAB29-mediated activation. The stretch at 319–348 (LTETIFLNQDLEEKNENQENDDEGEEDKLF) forms a coiled coil. Phosphoserine occurs at positions 910, 935, 955, and 973. LRR repeat units follow at residues 983–1004 (YITSLDLSANELRDIDALSQKC), 1012–1033 (HLEKLELHQNALTSFPQQLCET), 1036–1057 (SLTHLDLHSNKFTSFPSYLLKM), 1059–1080 (CIANLDVSRNDIGPSVVLDPTV), 1084–1105 (TLKQFNLSYNQLSFVPENLTDV), 1108–1129 (KLEQLILEGNKISGICSPLRLK), 1130–1150 (ELKILNLSKNHISSLSENFLE), 1156–1171 (ESFSARMNFLAAMPFL), 1174–1196 (SMTILKLSQNKFSCIPEAILNLP), 1197–1218 (HLRSLDMSSNDIQYLPGPAHWK), 1221–1245 (NLRELLFSHNQISILDLSEKAYLWS), 1246–1267 (RVEKLHLSHNKLKEIPPEIGCL), and 1269–1291 (NLTSLDVSYNLELRSFPNEMGKL). The residue at position 1292 (S1292) is a Phosphoserine; by autocatalysis. The 184-residue stretch at 1328-1511 (KAVPYNRMKL…KTIINESLNF (184 aa)) folds into the Roc domain. A GTP-binding site is contributed by 1341-1348 (GNTGSGKT). At S1444 the chain carries Phosphoserine. The 195-residue stretch at 1546-1740 (PVIDRKRLLQ…RMYWRQGIYL (195 aa)) folds into the COR domain. In terms of domain architecture, Protein kinase spans 1879–2138 (QAPEFLLGDG…FDILNSAELV (260 aa)). ATP is bound by residues L1885, D1887, G1888, G1891, V1893, A1904, K1906, M1947, E1948, A1950, S1954, and R1957. Residue D1994 is the Proton acceptor of the active site. Residues H1998, L2001, A2016, and D2017 each contribute to the ATP site. 2098-2121 (EYGCAPWPMVEKLIKQCLKENPQE) is a GTP binding site. 7 WD repeats span residues 2139–2183 (CLTR…SFLD), 2188–2228 (GYTS…LVIN), 2233–2276 (KKRH…AIFE), 2281–2327 (KLKG…FSFS), 2333–2377 (QKLI…EVWD), 2402–2438 (KESKHKMSYSGRVKTLCLQKNTALWIGTGGGHILLLD), and 2443–2497 (RLIR…TVWD). 2295–2298 (NVST) provides a ligand contact to GTP.

The protein belongs to the protein kinase superfamily. TKL Ser/Thr protein kinase family. In terms of assembly, homodimer. Homotetramer; when activated by GTP-bound RAB29. Interacts with PRKN, PRDX3, and TPCN2. Interacts with VPS35. Interacts (via N-terminus) with RAB29; this interaction is direct and stimulates kinase activity. Interacts (via ROC domain) with SEC16A. Interacts with APP; interaction promotes phosphorylation of 'Thr-743' of APP. Interacts with MAPT. Interacts with RAB8A, RAB10, and RAB12. Interacts (via N-terminus) with RAB32. Interacts with YWHAG; this interaction is dependent on phosphorylation of Ser-910 and either Ser-935 or Ser-1444. Interacts with SFN; this interaction is dependent on phosphorylation of Ser-910 and/or Ser-935. It depends on Mg(2+) as a cofactor. Autophosphorylated at Ser-1292; autophosphorylation is stimulated by RAB29. Phosphorylation of Ser-910 and either Ser-935 or Ser-1444 facilitates interaction with YWHAG. Phosphorylation of Ser-910 and/or Ser-935 facilitates interaction with SFN. In terms of processing, ubiquitinated by TRIM1; undergoes 'Lys-48'-linked polyubiquitination leading to proteasomal degradation. As to expression, expressed in pyramidal neurons in all cortical laminae of the visual cortex, in neurons of the substantia nigra pars compacta and caudate putamen (at protein level). Expressed in neutrophils (at protein level). Expressed in the brain. Expressed throughout the adult brain, but at a lower level than in heart and liver. Also expressed in placenta, lung, skeletal muscle, kidney and pancreas. In the brain, expressed in the cerebellum, cerebral cortex, medulla, spinal cord occipital pole, frontal lobe, temporal lobe and putamen. Expression is particularly high in brain dopaminoceptive areas.

Its subcellular location is the cytoplasmic vesicle. It is found in the perikaryon. It localises to the golgi apparatus membrane. The protein resides in the cell projection. The protein localises to the axon. Its subcellular location is the dendrite. It is found in the endoplasmic reticulum membrane. It localises to the secretory vesicle. The protein resides in the synaptic vesicle membrane. The protein localises to the endosome. Its subcellular location is the lysosome. It is found in the mitochondrion outer membrane. It localises to the cytoplasm. The protein resides in the cytoskeleton. The protein localises to the phagosome. It catalyses the reaction L-threonyl-[protein] + ATP = O-phospho-L-threonyl-[protein] + ADP + H(+). The enzyme catalyses L-seryl-[protein] + ATP = O-phospho-L-seryl-[protein] + ADP + H(+). It carries out the reaction GTP + H2O = GDP + phosphate + H(+). With respect to regulation, kinase activity is regulated by the GTPase activity of the ROC domain. GTP-bound LRRK2 kinase activity is stimulated by RAB29. Phosphorylation of RAB10 'Thr-73' is stimulated by RAB29 and RAB32. Inhibited by small molecule inhibitor MLi-2. Its function is as follows. Serine/threonine-protein kinase which phosphorylates a broad range of proteins involved in multiple processes such as neuronal plasticity, innate immunity, autophagy, and vesicle trafficking. Is a key regulator of RAB GTPases by regulating the GTP/GDP exchange and interaction partners of RABs through phosphorylation. Phosphorylates RAB3A, RAB3B, RAB3C, RAB3D, RAB5A, RAB5B, RAB5C, RAB8A, RAB8B, RAB10, RAB12, RAB29, RAB35, and RAB43. Regulates the RAB3IP-catalyzed GDP/GTP exchange for RAB8A through the phosphorylation of 'Thr-72' on RAB8A. Inhibits the interaction between RAB8A and GDI1 and/or GDI2 by phosphorylating 'Thr-72' on RAB8A. Regulates primary ciliogenesis through phosphorylation of RAB8A and RAB10, which promotes SHH signaling in the brain. Together with RAB29, plays a role in the retrograde trafficking pathway for recycling proteins, such as mannose-6-phosphate receptor (M6PR), between lysosomes and the Golgi apparatus in a retromer-dependent manner. Regulates neuronal process morphology in the intact central nervous system (CNS). Plays a role in synaptic vesicle trafficking. Plays an important role in recruiting SEC16A to endoplasmic reticulum exit sites (ERES) and in regulating ER to Golgi vesicle-mediated transport and ERES organization. Positively regulates autophagy through a calcium-dependent activation of the CaMKK/AMPK signaling pathway. The process involves activation of nicotinic acid adenine dinucleotide phosphate (NAADP) receptors, increase in lysosomal pH, and calcium release from lysosomes. Phosphorylates PRDX3. By phosphorylating APP on 'Thr-743', which promotes the production and the nuclear translocation of the APP intracellular domain (AICD), regulates dopaminergic neuron apoptosis. Acts as a positive regulator of innate immunity by mediating phosphorylation of RIPK2 downstream of NOD1 and NOD2, thereby enhancing RIPK2 activation. Independent of its kinase activity, inhibits the proteasomal degradation of MAPT, thus promoting MAPT oligomerization and secretion. In addition, has GTPase activity via its Roc domain which regulates LRRK2 kinase activity. Recruited by RAB29/RAB7L1 to overloaded lysosomes where it phosphorylates and stabilizes RAB8A and RAB10 which promote lysosomal content release and suppress lysosomal enlargement through the EHBP1 and EHBP1L1 effector proteins. This is Leucine-rich repeat serine/threonine-protein kinase 2 (LRRK2) from Homo sapiens (Human).